The sequence spans 1619 residues: Rap-GAP domain-containing protein DDB_G0281809 (1619 aa).

Disordered stretches follow at residues 128–249, 289–316, 907–974, and 1134–1153; these read SMSN…TTPI, QQQQ…MPGS, SIGG…PYIN, and ISNN…TSNN. 2 stretches are compositionally biased toward low complexity: residues 130–204 and 231–249; these read SNNN…SLSL and QISA…TTPI. The stretch at 265–295 forms a coiled coil; sequence FNEVVQQQQQQQQQQQQQQQQQQQQQQQQQS. Composition is skewed to low complexity over residues 916-926 and 934-965; these read SGNSSQPSSTG and SGSK…NGGS. The Rap-GAP domain maps to 1273–1494; that stretch reads LNMLDSVSER…TNRKKLISDI (222 aa). Residues 1554 to 1619 are disordered; sequence IGTFTLPPPP…LSQSEDQSHK (66 aa). Positions 1559–1573 are enriched in pro residues; the sequence is LPPPPISPTISPQPS. Low complexity predominate over residues 1574–1590; it reads PHLSSSGGSWASSKGGS. Positions 1591–1619 are enriched in polar residues; it reads TQPTTPSGRTSNFLSRRPNLSQSEDQSHK.

This chain is Rap-GAP domain-containing protein DDB_G0281809, found in Dictyostelium discoideum (Social amoeba).